Reading from the N-terminus, the 1165-residue chain is DNA-directed RNA polymerase subunit beta' (1165 aa).

Zn(2+) is bound by residues cysteine 60, cysteine 62, cysteine 75, and cysteine 78. Positions 449, 451, and 453 each coordinate Mg(2+). Cysteine 794, cysteine 868, cysteine 875, and cysteine 878 together coordinate Zn(2+).

The protein belongs to the RNA polymerase beta' chain family. In terms of assembly, the RNAP catalytic core consists of 2 alpha, 1 beta, 1 beta' and 1 omega subunit. When a sigma factor is associated with the core the holoenzyme is formed, which can initiate transcription. Requires Mg(2+) as cofactor. Zn(2+) serves as cofactor.

It carries out the reaction RNA(n) + a ribonucleoside 5'-triphosphate = RNA(n+1) + diphosphate. Functionally, DNA-dependent RNA polymerase catalyzes the transcription of DNA into RNA using the four ribonucleoside triphosphates as substrates. In Acetivibrio thermocellus (strain ATCC 27405 / DSM 1237 / JCM 9322 / NBRC 103400 / NCIMB 10682 / NRRL B-4536 / VPI 7372) (Clostridium thermocellum), this protein is DNA-directed RNA polymerase subunit beta'.